We begin with the raw amino-acid sequence, 285 residues long: Bifunctional protein FolD (285 aa).

Residues 165–167 (GRS) and Ser190 contribute to the NADP(+) site.

Belongs to the tetrahydrofolate dehydrogenase/cyclohydrolase family. Homodimer.

The enzyme catalyses (6R)-5,10-methylene-5,6,7,8-tetrahydrofolate + NADP(+) = (6R)-5,10-methenyltetrahydrofolate + NADPH. It catalyses the reaction (6R)-5,10-methenyltetrahydrofolate + H2O = (6R)-10-formyltetrahydrofolate + H(+). The protein operates within one-carbon metabolism; tetrahydrofolate interconversion. In terms of biological role, catalyzes the oxidation of 5,10-methylenetetrahydrofolate to 5,10-methenyltetrahydrofolate and then the hydrolysis of 5,10-methenyltetrahydrofolate to 10-formyltetrahydrofolate. This Ligilactobacillus salivarius (strain UCC118) (Lactobacillus salivarius) protein is Bifunctional protein FolD.